A 106-amino-acid polypeptide reads, in one-letter code: Ribonuclease P protein component 4 (106 aa).

4 residues coordinate Zn(2+): cysteine 63, cysteine 66, cysteine 89, and cysteine 92.

This sequence belongs to the eukaryotic/archaeal RNase P protein component 4 family. Consists of a catalytic RNA component and at least 4-5 protein subunits. Zn(2+) is required as a cofactor.

The protein localises to the cytoplasm. The catalysed reaction is Endonucleolytic cleavage of RNA, removing 5'-extranucleotides from tRNA precursor.. In terms of biological role, part of ribonuclease P, a protein complex that generates mature tRNA molecules by cleaving their 5'-ends. The sequence is that of Ribonuclease P protein component 4 from Methanosphaerula palustris (strain ATCC BAA-1556 / DSM 19958 / E1-9c).